A 360-amino-acid chain; its full sequence is Peptide chain release factor 1 (360 aa).

Gln235 is subject to N5-methylglutamine. Residues 285 to 313 (KRQQAEASTRRNLLGSGDRSDRNRTYNFP) form a disordered region.

The protein belongs to the prokaryotic/mitochondrial release factor family. Post-translationally, methylated by PrmC. Methylation increases the termination efficiency of RF1.

The protein localises to the cytoplasm. Its function is as follows. Peptide chain release factor 1 directs the termination of translation in response to the peptide chain termination codons UAG and UAA. The sequence is that of Peptide chain release factor 1 from Klebsiella pneumoniae (strain 342).